A 123-amino-acid chain; its full sequence is Small ribosomal subunit protein uS12 (123 aa).

A disordered region spans residues 1 to 22 (MATINQLVRQPRKRSVEKSDVP). The residue at position 89 (Asp-89) is a 3-methylthioaspartic acid. The tract at residues 100-123 (GSLDTSGVKGRNQGRSKYGTKRPK) is disordered. Over residues 111 to 123 (NQGRSKYGTKRPK) the composition is skewed to basic residues.

It belongs to the universal ribosomal protein uS12 family. Part of the 30S ribosomal subunit. Contacts proteins S8 and S17. May interact with IF1 in the 30S initiation complex.

In terms of biological role, with S4 and S5 plays an important role in translational accuracy. Its function is as follows. Interacts with and stabilizes bases of the 16S rRNA that are involved in tRNA selection in the A site and with the mRNA backbone. Located at the interface of the 30S and 50S subunits, it traverses the body of the 30S subunit contacting proteins on the other side and probably holding the rRNA structure together. The combined cluster of proteins S8, S12 and S17 appears to hold together the shoulder and platform of the 30S subunit. This chain is Small ribosomal subunit protein uS12, found in Pseudomonas putida (strain GB-1).